A 445-amino-acid polypeptide reads, in one-letter code: Cryptochrome DASH (445 aa).

One can recognise a Photolyase/cryptochrome alpha/beta domain in the interval 4–137 (KIGLYWFTFD…VIVQHSVRSL (134 aa)).

Belongs to the DNA photolyase class-1 family. FAD serves as cofactor. The cofactor is (6R)-5,10-methylene-5,6,7,8-tetrahydrofolate.

Functionally, may have a photoreceptor function. Binds DNA; probably functions as a transcriptional repressor. This Vibrio parahaemolyticus serotype O3:K6 (strain RIMD 2210633) protein is Cryptochrome DASH (cry).